The following is a 159-amino-acid chain: Phosphopantetheine adenylyltransferase (159 aa).

Position 9 (Ser-9) interacts with substrate. Residues Ser-9–Phe-10 and His-17 contribute to the ATP site. Residues Lys-41, Leu-74, and Lys-88 each contribute to the substrate site. ATP contacts are provided by residues Gly-89–Arg-91, Glu-99, and Tyr-123–Thr-129.

Belongs to the bacterial CoaD family. In terms of assembly, homohexamer. Mg(2+) is required as a cofactor.

It localises to the cytoplasm. It catalyses the reaction (R)-4'-phosphopantetheine + ATP + H(+) = 3'-dephospho-CoA + diphosphate. Its pathway is cofactor biosynthesis; coenzyme A biosynthesis; CoA from (R)-pantothenate: step 4/5. Its function is as follows. Reversibly transfers an adenylyl group from ATP to 4'-phosphopantetheine, yielding dephospho-CoA (dPCoA) and pyrophosphate. The chain is Phosphopantetheine adenylyltransferase from Corynebacterium diphtheriae (strain ATCC 700971 / NCTC 13129 / Biotype gravis).